A 79-amino-acid chain; its full sequence is Conotoxin Tr6.2 (79 aa).

The N-terminal stretch at 1–22 is a signal peptide; that stretch reads MKLTCVLIISVLFLTASQLITA. A propeptide spanning residues 23-47 is cleaved from the precursor; that stretch reads VYSRDKQQYRAARLRDEMRNLKGAR. Cystine bridges form between C49–C62, C56–C67, and C61–C77. 4-hydroxyproline is present on residues P60 and P63.

The protein belongs to the conotoxin O1 superfamily. Expressed by the venom duct.

Its subcellular location is the secreted. In terms of biological role, ion channel inhibitor that inhibits the increase in intracellular calcium upon depolarization in DRG neurons. In vivo, both intraperitoneal and intracranial injections into mice induce hyperactivity. This Conus terebra (Sea snail) protein is Conotoxin Tr6.2.